Here is a 242-residue protein sequence, read N- to C-terminus: Argininosuccinate synthase (242 aa).

This sequence belongs to the argininosuccinate synthase family. Type 2 subfamily. In terms of assembly, homotetramer.

The protein resides in the cytoplasm. It catalyses the reaction L-citrulline + L-aspartate + ATP = 2-(N(omega)-L-arginino)succinate + AMP + diphosphate + H(+). It participates in amino-acid biosynthesis; L-arginine biosynthesis; L-arginine from L-ornithine and carbamoyl phosphate: step 2/3. The sequence is that of Argininosuccinate synthase (argG) from Dickeya chrysanthemi (Pectobacterium chrysanthemi).